The chain runs to 119 residues: Large ribosomal subunit protein bL20 (119 aa).

It belongs to the bacterial ribosomal protein bL20 family.

Its function is as follows. Binds directly to 23S ribosomal RNA and is necessary for the in vitro assembly process of the 50S ribosomal subunit. It is not involved in the protein synthesizing functions of that subunit. This Herminiimonas arsenicoxydans protein is Large ribosomal subunit protein bL20.